A 215-amino-acid polypeptide reads, in one-letter code: uncharacterized protein (215 aa).

The disordered stretch occupies residues 120–147 (HRAPQGTSSYQEGRRAHEATSAESDDDN).

This is an uncharacterized protein from Homo sapiens (Human).